The following is a 595-amino-acid chain: Isoprene synthase, chloroplastic (595 aa).

Residues 1 to 37 (MATELLCLHRPISLTHKLFRNPLPKVIQATPLTLKLR) constitute a chloroplast transit peptide. Residue D345 coordinates dimethylallyl diphosphate. The Mg(2+) site is built by D345 and D349. The DDXXD motif motif lies at 345–349 (DDIYD). Residues E423, R486, and N489 each coordinate dimethylallyl diphosphate. Mg(2+)-binding residues include N489, S493, and E497.

It belongs to the terpene synthase family. Tpsb subfamily. As to quaternary structure, homodimer. Mg(2+) serves as cofactor. Requires Mn(2+) as cofactor.

Its subcellular location is the plastid. The protein localises to the chloroplast. The catalysed reaction is dimethylallyl diphosphate = isoprene + diphosphate. It functions in the pathway secondary metabolite biosynthesis; terpenoid biosynthesis. Competitive inhibition is mediated by geranyl diphosphate (GPP). In terms of biological role, lyase that catalyzes the formation of isoprene from dimethylallyl diphosphate via a syn-periplanar elimination mechanism in which the diphosphate-leaving group serves as a general base. This Populus canescens (Grey poplar) protein is Isoprene synthase, chloroplastic.